Here is a 352-residue protein sequence, read N- to C-terminus: 3-isopropylmalate dehydrogenase (352 aa).

Positions 91, 101, 129, and 218 each coordinate substrate. Aspartate 218, aspartate 242, and aspartate 246 together coordinate Mg(2+). Glycine 281 to asparagine 293 serves as a coordination point for NAD(+).

The protein belongs to the isocitrate and isopropylmalate dehydrogenases family. LeuB type 1 subfamily. Homodimer. The cofactor is Mg(2+). Mn(2+) is required as a cofactor.

The protein localises to the cytoplasm. It carries out the reaction (2R,3S)-3-isopropylmalate + NAD(+) = 4-methyl-2-oxopentanoate + CO2 + NADH. It participates in amino-acid biosynthesis; L-leucine biosynthesis; L-leucine from 3-methyl-2-oxobutanoate: step 3/4. In terms of biological role, catalyzes the oxidation of 3-carboxy-2-hydroxy-4-methylpentanoate (3-isopropylmalate) to 3-carboxy-4-methyl-2-oxopentanoate. The product decarboxylates to 4-methyl-2 oxopentanoate. This is 3-isopropylmalate dehydrogenase from Novosphingobium aromaticivorans (strain ATCC 700278 / DSM 12444 / CCUG 56034 / CIP 105152 / NBRC 16084 / F199).